We begin with the raw amino-acid sequence, 352 residues long: Pheromone-regulated membrane protein 6 (352 aa).

The Extracellular portion of the chain corresponds to 1–36 (MESSLQKLKFQDIDINLIPTAKWTTKLQYILYTWCQ). Residues 37–57 (SILHVAMFFSDIYTCIKLLAF) form a helical membrane-spanning segment. The Cytoplasmic portion of the chain corresponds to 58–76 (NTWSNNIIQPFLEFRISKW). Residues 77–97 (LFSGCILCSSLILIWELVIGL) traverse the membrane as a helical segment. Topologically, residues 98–227 (RVYRKKEITS…VILSFMLFSF (130 aa)) are extracellular. A helical membrane pass occupies residues 228–248 (IIWVILISKLILSIIIFIIFI). Residues 249 to 352 (RPRFLSSKRK…FPQKYKHKYI (104 aa)) lie on the Cytoplasmic side of the membrane.

This sequence belongs to the KCH1 low affinity K(+) transporter family.

The protein localises to the cell membrane. Its subcellular location is the bud tip. It localises to the vacuole lumen. It catalyses the reaction K(+)(in) = K(+)(out). Its function is as follows. Low affinity potassium transporter that, with KCH1, participates in high-affinity Ca(2+) influx system (HACS) activation during the response to mating pheromone. Directly promotes K(+) influx and HACS may electrochemically respond to this K(+) influx. KCH1 and PRM6/KCH2 act at the apex of the calcium signaling pathway that is used for survival during prolonged exposures to mating pheromones. In Saccharomyces cerevisiae (strain ATCC 204508 / S288c) (Baker's yeast), this protein is Pheromone-regulated membrane protein 6.